The sequence spans 431 residues: Histidinol dehydrogenase (431 aa).

NAD(+)-binding residues include Tyr-127, Gln-185, and Asn-208. Substrate-binding residues include Ser-234, Gln-256, and His-259. Zn(2+) is bound by residues Gln-256 and His-259. Active-site proton acceptor residues include Glu-323 and His-324. Residues His-324, Asp-357, Glu-411, and His-416 each coordinate substrate. Asp-357 is a binding site for Zn(2+). His-416 is a Zn(2+) binding site.

Belongs to the histidinol dehydrogenase family. Zn(2+) serves as cofactor.

It carries out the reaction L-histidinol + 2 NAD(+) + H2O = L-histidine + 2 NADH + 3 H(+). The protein operates within amino-acid biosynthesis; L-histidine biosynthesis; L-histidine from 5-phospho-alpha-D-ribose 1-diphosphate: step 9/9. Functionally, catalyzes the sequential NAD-dependent oxidations of L-histidinol to L-histidinaldehyde and then to L-histidine. The protein is Histidinol dehydrogenase of Vibrio parahaemolyticus serotype O3:K6 (strain RIMD 2210633).